The chain runs to 757 residues: Endonuclease MutS2 (757 aa).

An ATP-binding site is contributed by 321–328 (GPNMGGKT). The Smr domain occupies 681–756 (IDIRGMTVEE…GTGVTVVEVE (76 aa)).

Belongs to the DNA mismatch repair MutS family. MutS2 subfamily. Homodimer. Binds to stalled ribosomes, contacting rRNA.

Endonuclease that is involved in the suppression of homologous recombination and thus may have a key role in the control of bacterial genetic diversity. In terms of biological role, acts as a ribosome collision sensor, splitting the ribosome into its 2 subunits. Detects stalled/collided 70S ribosomes which it binds and splits by an ATP-hydrolysis driven conformational change. Acts upstream of the ribosome quality control system (RQC), a ribosome-associated complex that mediates the extraction of incompletely synthesized nascent chains from stalled ribosomes and their subsequent degradation. Probably generates substrates for RQC. The protein is Endonuclease MutS2 of Thermotoga neapolitana (strain ATCC 49049 / DSM 4359 / NBRC 107923 / NS-E).